The primary structure comprises 101 residues: Small ribosomal subunit protein bS18c (101 aa).

A compositionally biased stretch (basic residues) spans M1–L19. Positions M1–S24 are disordered.

It belongs to the bacterial ribosomal protein bS18 family. In terms of assembly, part of the 30S ribosomal subunit.

Its subcellular location is the plastid. It is found in the chloroplast. The protein is Small ribosomal subunit protein bS18c of Amborella trichopoda.